Consider the following 175-residue polypeptide: Diacylglycerol kinase (175 aa).

2 helical membrane-spanning segments follow: residues 55-75 (VAPN…YAFA) and 96-116 (LLHL…LVMI). The active-site Proton acceptor is the glutamate 118. Glutamate 125 provides a ligand contact to a divalent metal cation. The chain crosses the membrane as a helical span at residues 151 to 171 (VLLAAIAAVIVGGCLLLPPLL).

The protein belongs to the bacterial diacylglycerol kinase family. It depends on Mg(2+) as a cofactor.

The protein resides in the cell membrane. It carries out the reaction a 1,2-diacyl-sn-glycerol + ATP = a 1,2-diacyl-sn-glycero-3-phosphate + ADP + H(+). Functionally, catalyzes the ATP-dependent phosphorylation of sn-l,2-diacylglycerol (DAG) to phosphatidic acid. In Synechocystis sp. (strain ATCC 27184 / PCC 6803 / Kazusa), this protein is Diacylglycerol kinase (dgkA).